Here is a 128-residue protein sequence, read N- to C-terminus: Small ribosomal subunit protein bS6 (128 aa).

The protein belongs to the bacterial ribosomal protein bS6 family.

Binds together with bS18 to 16S ribosomal RNA. This is Small ribosomal subunit protein bS6 from Leifsonia xyli subsp. xyli (strain CTCB07).